Here is a 291-residue protein sequence, read N- to C-terminus: Protease HtpX homolog (291 aa).

A run of 2 helical transmembrane segments spans residues V4–L24 and M38–L58. Zn(2+) is bound at residue H144. The active site involves E145. Position 148 (H148) interacts with Zn(2+). 2 helical membrane passes run L159–L179 and I199–F219. E224 contributes to the Zn(2+) binding site.

Belongs to the peptidase M48B family. It depends on Zn(2+) as a cofactor.

The protein resides in the cell inner membrane. The polypeptide is Protease HtpX homolog (Chlorobium phaeovibrioides (strain DSM 265 / 1930) (Prosthecochloris vibrioformis (strain DSM 265))).